The primary structure comprises 314 residues: Ribosomal RNA small subunit methyltransferase H (314 aa).

Residues 40–42, Asp-60, Phe-85, Asp-107, and Gln-114 contribute to the S-adenosyl-L-methionine site; that span reads GGH.

This sequence belongs to the methyltransferase superfamily. RsmH family.

It is found in the cytoplasm. It carries out the reaction cytidine(1402) in 16S rRNA + S-adenosyl-L-methionine = N(4)-methylcytidine(1402) in 16S rRNA + S-adenosyl-L-homocysteine + H(+). In terms of biological role, specifically methylates the N4 position of cytidine in position 1402 (C1402) of 16S rRNA. The protein is Ribosomal RNA small subunit methyltransferase H of Hydrogenovibrio crunogenus (strain DSM 25203 / XCL-2) (Thiomicrospira crunogena).